The following is a 663-amino-acid chain: Polyunsaturated fatty acid lipoxygenase ALOX12 (663 aa).

In terms of domain architecture, PLAT spans Gly2–Arg114. The Lipoxygenase domain occupies Leu115–Ile663. Ser246 carries the phosphoserine modification. Residues His360, His365, His540, Asn544, and Ile663 each coordinate Fe cation.

The protein belongs to the lipoxygenase family. Requires Fe cation as cofactor. Found primarily in platelets and in microsomal and cytosolic fractions of the epidermis (at protein level).

It localises to the cytoplasm. It is found in the cytosol. The protein resides in the membrane. The enzyme catalyses (5Z,8Z,11Z,14Z)-eicosatetraenoate + O2 = (12S)-hydroperoxy-(5Z,8Z,10E,14Z)-eicosatetraenoate. The catalysed reaction is (9Z,12Z)-octadecadienoate + O2 = (13S)-hydroperoxy-(9Z,11E)-octadecadienoate. It catalyses the reaction 2 leukotriene A4 + O2 + 2 H2O = 2 lipoxin A4. It carries out the reaction 2 leukotriene A4 + O2 + 2 H2O = 2 lipoxin B4. The enzyme catalyses (5Z,8Z,11Z)-eicosatrienoate + O2 = (12S)-hydroperoxy-(5Z,8Z,10E)-eicosatrienoate. The catalysed reaction is (8Z,11Z,14Z)-eicosatrienoate + O2 = (12S)-hydroperoxy-(8Z,10E,14Z)-eicosatrienoate. It catalyses the reaction (4Z,7Z,10Z,13Z,16Z,19Z)-docosahexaenoate + O2 = (14S)-hydroperoxy-(4Z,7Z,10Z,12E,16Z,19Z)-docosahexaenoate. It carries out the reaction (7S)-hydroperoxy-(4Z,8E,10Z,13Z,16Z,19Z)-docosahexaenoate + O2 = (7S,14S)-dihydroperoxy-(4Z,8E,10Z,12E,16Z,19Z)-docosahexaenoate. The enzyme catalyses (7S)-hydroperoxy-(4Z,8E,10Z,13Z,16Z,19Z)-docosahexaenoate + O2 = (7S,17S)-dihydroperoxy-(4Z,8E,10Z,13Z,15E,19Z)-docosahexaenoate. The catalysed reaction is (14R,15S)-epoxy-(5Z,8Z,11Z)-eicosatrienoate + O2 = (12S)-hydroperoxy-(14R,15S)-epoxy-(5Z,8Z,10E)-eicosatrienoate. It catalyses the reaction (14S,15R)-epoxy-(5Z,8Z,11Z)-eicosatrienoate + O2 = (12S)-hydroperoxy-(14S,15R)-epoxy-(5Z,8Z,10E)-eicosatrienoate. It carries out the reaction (5Z,8Z,11Z,14Z)-eicosatetraenoate + O2 = (15S)-hydroperoxy-(5Z,8Z,11Z,13E)-eicosatetraenoate. The enzyme catalyses (14S)-hydroperoxy-(4Z,7Z,10Z,12E,16Z,19Z)-docosahexaenoate = (13S,14S)-epoxy-(4Z,7Z,9E,11E,16Z,19Z)-docosahexaenoate + H2O. The catalysed reaction is N-(5Z,8Z,11Z,14Z)-eicosatetraenoyl-L-alanine + O2 = N-(15S)-hydroperoxy-(5Z,8Z,11Z,13E)-eicosatetraenoyl-alanine. It catalyses the reaction N-(5Z,8Z,11Z,14Z)-eicosatetraenoyl-L-alanine + O2 = N-(12S)-hydroperoxy-(5Z,8Z,10E,14Z)-eicosatetraenoyl-alanine. It carries out the reaction N-(5Z,8Z,11Z,14Z)-eicosatetraenoyl-gamma-aminobutanoate + O2 = N-(15S)-hydroperoxy-(5Z,8Z,11Z,13E)-eicosatetraenoyl-gamma-aminobutanoate. The enzyme catalyses N-(5Z,8Z,11Z,14Z)-eicosatetraenoyl-gamma-aminobutanoate + O2 = N-(12S)-hydroperoxy-(5Z,8Z,10E,14Z)-eicosatetraenoyl-gamma-aminobutanoate. The catalysed reaction is N-(5Z,8Z,11Z,14Z)-eicosatetraenoyl-glycine + O2 = N-(15S)-hydroperoxy-(5Z,8Z,11Z,13E)-eicosatetraenoyl-glycine. It catalyses the reaction N-(5Z,8Z,11Z,14Z)-eicosatetraenoyl-glycine + O2 = N-(12S)-hydroperoxy-(5Z,8Z,10E,14Z)-eicosatetraenoyl-glycine. It carries out the reaction N-(5Z,8Z,11Z,14Z)-eicosatetraenoyl-taurine + O2 = N-(12S)-hydroperoxy-(5Z,8Z,10E,14Z)-eicosatetraenoyl-taurine. The enzyme catalyses N-(5Z,8Z,11Z,14Z)-eicosatetraenoyl-taurine + O2 = N-(15S)-hydroperoxy-(5Z,8Z,11Z,13E)-eicosatetraenoyl-taurine. The catalysed reaction is (5Z,8Z,11Z,14Z,17Z)-eicosapentaenoate + O2 = (12S)-hydroperoxy-(5Z,8Z,10E,14Z,17Z)-eicosapentaenoate. The protein operates within lipid metabolism; hydroperoxy eicosatetraenoic acid biosynthesis. With respect to regulation, activated by EGF. Arachidonic acid conversion is inhibited by (13S,14S)-epoxy-(4Z,7Z,9E,11E,16Z,19Z)-docosahexaenoate (13S,14S-epoxy-DHA). Arachidonate 12-lipoxygenase activity is decreased when PH decreases from 7.4 to 6. Functionally, catalyzes the regio and stereo-specific incorporation of molecular oxygen into free and esterified polyunsaturated fatty acids generating lipid hydroperoxides that can be further reduced to the corresponding hydroxy species. Mainly converts arachidonate ((5Z,8Z,11Z,14Z)-eicosatetraenoate) to the specific bioactive lipid (12S)-hydroperoxyeicosatetraenoate/(12S)-HPETE. Through the production of bioactive lipids like (12S)-HPETE it regulates different biological processes including platelet activation. It can also catalyze the epoxidation of double bonds of polyunsaturated fatty acids such as (14S)-hydroperoxy-docosahexaenoate/(14S)-HPDHA resulting in the formation of (13S,14S)-epoxy-DHA. Furthermore, it may participate in the sequential oxidations of DHA ((4Z,7Z,10Z,13Z,16Z,19Z)-docosahexaenoate) to generate specialized pro-resolving mediators (SPMs) like resolvin D5 ((7S,17S)-diHPDHA) and (7S,14S)-diHPDHA, that actively down-regulate the immune response and have anti-aggregation properties with platelets. An additional function involves a multistep process by which it transforms leukotriene A4/LTA4 into the bioactive lipids lipoxin A4/LXA4 and lipoxin B4/LXB4, both are vasoactive and LXA4 may regulate neutrophil function via occupancy of specific recognition sites. Can also peroxidize linoleate ((9Z,12Z)-octadecadienoate) to (13S)-hydroperoxyoctadecadienoate/ (13S-HPODE). Due to its role in regulating both the expression of the vascular endothelial growth factor (VEGF, an angiogenic factor involved in the survival and metastasis of solid tumors) and the expression of integrin beta-1 (known to affect tumor cell migration and proliferation), it can be regarded as protumorigenic. Important for cell survival, as it may play a role not only in proliferation but also in the prevention of apoptosis in vascular smooth muscle cells. The polypeptide is Polyunsaturated fatty acid lipoxygenase ALOX12 (Alox12) (Mus musculus (Mouse)).